An 861-amino-acid chain; its full sequence is Homeobox-leucine zipper protein HOX29 (861 aa).

The segment at residues 2-65 (DASKYVRYTP…NRRCREKQRK (64 aa)) is a DNA-binding region (homeobox). A coiled-coil region spans residues 57-99 (RRCREKQRKESSRLQALNRKLTAMNKLLMEENDRLQKQVSQLV). The region spanning 162–390 (RDASPAGLMS…VAHEDTRSVI (229 aa)) is the START domain.

It belongs to the HD-ZIP homeobox family. Class III subfamily. Expressed in roots, stems and leaf blades.

Its subcellular location is the nucleus. Probable transcription factor. The chain is Homeobox-leucine zipper protein HOX29 (HOX29) from Oryza sativa subsp. indica (Rice).